A 383-amino-acid chain; its full sequence is Acetylornithine deacetylase (383 aa).

Residue H80 participates in Zn(2+) binding. D82 is a catalytic residue. D112 lines the Zn(2+) pocket. The active site involves E144. Zn(2+)-binding residues include E145, E169, and H355.

This sequence belongs to the peptidase M20A family. ArgE subfamily. In terms of assembly, homodimer. Zn(2+) serves as cofactor. Requires Co(2+) as cofactor. Glutathione is required as a cofactor.

It localises to the cytoplasm. It carries out the reaction N(2)-acetyl-L-ornithine + H2O = L-ornithine + acetate. The protein operates within amino-acid biosynthesis; L-arginine biosynthesis; L-ornithine from N(2)-acetyl-L-ornithine (linear): step 1/1. In terms of biological role, catalyzes the hydrolysis of the amide bond of N(2)-acetylated L-amino acids. Cleaves the acetyl group from N-acetyl-L-ornithine to form L-ornithine, an intermediate in L-arginine biosynthesis pathway, and a branchpoint in the synthesis of polyamines. This Salmonella choleraesuis (strain SC-B67) protein is Acetylornithine deacetylase.